The following is a 155-amino-acid chain: 6,7-dimethyl-8-ribityllumazine synthase (155 aa).

5-amino-6-(D-ribitylamino)uracil contacts are provided by residues Phe-24, 58 to 60, and 82 to 84; these read AFE and AII. 87 to 88 serves as a coordination point for (2S)-2-hydroxy-3-oxobutyl phosphate; it reads ST. His-90 functions as the Proton donor in the catalytic mechanism. Phe-115 provides a ligand contact to 5-amino-6-(D-ribitylamino)uracil. Arg-129 contributes to the (2S)-2-hydroxy-3-oxobutyl phosphate binding site.

This sequence belongs to the DMRL synthase family.

The catalysed reaction is (2S)-2-hydroxy-3-oxobutyl phosphate + 5-amino-6-(D-ribitylamino)uracil = 6,7-dimethyl-8-(1-D-ribityl)lumazine + phosphate + 2 H2O + H(+). The protein operates within cofactor biosynthesis; riboflavin biosynthesis; riboflavin from 2-hydroxy-3-oxobutyl phosphate and 5-amino-6-(D-ribitylamino)uracil: step 1/2. Its function is as follows. Catalyzes the formation of 6,7-dimethyl-8-ribityllumazine by condensation of 5-amino-6-(D-ribitylamino)uracil with 3,4-dihydroxy-2-butanone 4-phosphate. This is the penultimate step in the biosynthesis of riboflavin. The chain is 6,7-dimethyl-8-ribityllumazine synthase from Chlorobium phaeobacteroides (strain BS1).